The primary structure comprises 209 residues: Vacuolar protein sorting-associated protein 28 homolog 1 (209 aa).

A VPS28 N-terminal domain is found at 1–99 (MEVKLWNDKR…TSGVPATVEH (99 aa)). The VPS28 C-terminal domain occupies 109 to 205 (SSASVVAECV…SYNSFMAALP (97 aa)).

The protein belongs to the VPS28 family. As to quaternary structure, component of the endosomal sorting required for transport complex I (ESCRT-I), composed of ELC, VPS28 and VPS37. Interacts with ELC.

Its subcellular location is the endosome. Component of the ESCRT-I complex (endosomal sorting complex required for transport I), a regulator of vesicular trafficking process. Required for the sorting of endocytic ubiquitinated cargos into multivesicular bodies (MVBs). Mediates the association to the ESCRT-0 complex. This Arabidopsis thaliana (Mouse-ear cress) protein is Vacuolar protein sorting-associated protein 28 homolog 1 (VPS28-1).